A 249-amino-acid polypeptide reads, in one-letter code: MSDSAATDTKQSFQLKSASVSLTALELYYFDNDEFEANLRDKISQAPGFFKDIPLIISLEKYEGLDSELDFFRMIGTCRRHNIHVIGVRAANDDQRRLARGASLALLPGGSLKEKPAQEAPAQAEPEAAAAPEPANEPAPAKIINQPVRSGQQVYAPEGDLIILAPVQAGAEVLAAGNIHVYGPLRGRALAGIHGAESARVFCQSLEAELVSIAGHYKISEDLQDIGWKSAVQIQLRDDVLVVTPLDKA.

Positions 115–141 (KPAQEAPAQAEPEAAAAPEPANEPAPA) are disordered. A compositionally biased stretch (low complexity) spans 118–141 (QEAPAQAEPEAAAAPEPANEPAPA).

This sequence belongs to the MinC family. Interacts with MinD and FtsZ.

Functionally, cell division inhibitor that blocks the formation of polar Z ring septums. Rapidly oscillates between the poles of the cell to destabilize FtsZ filaments that have formed before they mature into polar Z rings. Prevents FtsZ polymerization. This Marinobacter nauticus (strain ATCC 700491 / DSM 11845 / VT8) (Marinobacter aquaeolei) protein is Probable septum site-determining protein MinC.